A 361-amino-acid polypeptide reads, in one-letter code: Chorismate synthase (361 aa).

Arg47 contributes to the NADP(+) binding site. Residues 124 to 126 (RAS), Gly286, 301 to 305 (KPTAT), and Arg327 each bind FMN.

The protein belongs to the chorismate synthase family. As to quaternary structure, homotetramer. The cofactor is FMNH2.

The catalysed reaction is 5-O-(1-carboxyvinyl)-3-phosphoshikimate = chorismate + phosphate. It functions in the pathway metabolic intermediate biosynthesis; chorismate biosynthesis; chorismate from D-erythrose 4-phosphate and phosphoenolpyruvate: step 7/7. Its function is as follows. Catalyzes the anti-1,4-elimination of the C-3 phosphate and the C-6 proR hydrogen from 5-enolpyruvylshikimate-3-phosphate (EPSP) to yield chorismate, which is the branch point compound that serves as the starting substrate for the three terminal pathways of aromatic amino acid biosynthesis. This reaction introduces a second double bond into the aromatic ring system. The polypeptide is Chorismate synthase (Prochlorococcus marinus (strain NATL2A)).